We begin with the raw amino-acid sequence, 258 residues long: Imidazole glycerol phosphate synthase subunit HisF (258 aa).

Residues Asp-11 and Asp-130 contribute to the active site.

The protein belongs to the HisA/HisF family. In terms of assembly, heterodimer of HisH and HisF.

Its subcellular location is the cytoplasm. It carries out the reaction 5-[(5-phospho-1-deoxy-D-ribulos-1-ylimino)methylamino]-1-(5-phospho-beta-D-ribosyl)imidazole-4-carboxamide + L-glutamine = D-erythro-1-(imidazol-4-yl)glycerol 3-phosphate + 5-amino-1-(5-phospho-beta-D-ribosyl)imidazole-4-carboxamide + L-glutamate + H(+). It functions in the pathway amino-acid biosynthesis; L-histidine biosynthesis; L-histidine from 5-phospho-alpha-D-ribose 1-diphosphate: step 5/9. IGPS catalyzes the conversion of PRFAR and glutamine to IGP, AICAR and glutamate. The HisF subunit catalyzes the cyclization activity that produces IGP and AICAR from PRFAR using the ammonia provided by the HisH subunit. The chain is Imidazole glycerol phosphate synthase subunit HisF from Baumannia cicadellinicola subsp. Homalodisca coagulata.